A 391-amino-acid polypeptide reads, in one-letter code: Chaperone protein DnaJ (391 aa).

In terms of domain architecture, J spans 6-71; that stretch reads CYYEVLKVER…NKRARYDQYG (66 aa). A CR-type zinc finger spans residues 137–215; the sequence is GCHKDIVFRR…CRGTGTQNEK (79 aa). Zn(2+)-binding residues include C150, C153, C167, C170, C189, C192, C203, and C206. 4 CXXCXGXG motif repeats span residues 150–157, 167–174, 189–196, and 203–210; these read CDTCDGSG, CTMCGGQG, CPTCKGAG, and CGKCRGTG. Positions 372–391 are disordered; that stretch reads FFDPEPEEAGTGSTDTEKDS.

This sequence belongs to the DnaJ family. Homodimer. Requires Zn(2+) as cofactor.

The protein resides in the cytoplasm. Participates actively in the response to hyperosmotic and heat shock by preventing the aggregation of stress-denatured proteins and by disaggregating proteins, also in an autonomous, DnaK-independent fashion. Unfolded proteins bind initially to DnaJ; upon interaction with the DnaJ-bound protein, DnaK hydrolyzes its bound ATP, resulting in the formation of a stable complex. GrpE releases ADP from DnaK; ATP binding to DnaK triggers the release of the substrate protein, thus completing the reaction cycle. Several rounds of ATP-dependent interactions between DnaJ, DnaK and GrpE are required for fully efficient folding. Also involved, together with DnaK and GrpE, in the DNA replication of plasmids through activation of initiation proteins. The chain is Chaperone protein DnaJ from Rhodopirellula baltica (strain DSM 10527 / NCIMB 13988 / SH1).